The sequence spans 690 residues: Lipase 2 (690 aa).

Residues 1-37 (MLRGQEERKYSIRKYSIGVVSVLAATMFVVSSHEAQA) form the signal peptide. The propeptide occupies 38–295 (SEKTPTNAAV…ADAKKVRPLK (258 aa)). Polar residues predominate over residues 53–71 (NQPGEQGNAITSHQMQSGK). Positions 53-266 (NQPGEQGNAI…KPTDKNTDNK (214 aa)) are disordered. The segment covering 72-81 (QLDDMHKENG) has biased composition (basic and acidic residues). 3 stretches are compositionally biased toward polar residues: residues 93 to 114 (LQLSKYQSTQNSKTIRTQNDNQ), 124 to 171 (SKQS…QPSI), and 185 to 206 (PTSTTPPSNDKTAPKSTKAQDA). Composition is skewed to basic and acidic residues over residues 225-237 (IDAKQDDTVRQSE) and 257-266 (KPTDKNTDNK). S412 functions as the Nucleophile in the catalytic mechanism. Residue G579 participates in Ca(2+) binding. The active-site Charge relay system is the D603. D644 is a Ca(2+) binding site. H645 serves as the catalytic Charge relay system. Positions 647, 652, and 655 each coordinate Ca(2+).

Belongs to the AB hydrolase superfamily. Lipase family.

It is found in the secreted. The catalysed reaction is a triacylglycerol + H2O = a diacylglycerol + a fatty acid + H(+). The protein is Lipase 2 (lip2) of Staphylococcus aureus (strain MSSA476).